A 296-amino-acid polypeptide reads, in one-letter code: Formamidopyrimidine-DNA glycosylase (296 aa).

The active-site Schiff-base intermediate with DNA is proline 2. Glutamate 3 serves as the catalytic Proton donor. Lysine 61 acts as the Proton donor; for beta-elimination activity in catalysis. Positions 95, 122, and 169 each coordinate DNA. An FPG-type zinc finger spans residues 255 to 289; the sequence is NAYGRNDQPCARCGTPIQRETFMNRSSYSCPRCQP. Catalysis depends on arginine 279, which acts as the Proton donor; for delta-elimination activity.

Belongs to the FPG family. In terms of assembly, monomer. Zn(2+) serves as cofactor.

It catalyses the reaction Hydrolysis of DNA containing ring-opened 7-methylguanine residues, releasing 2,6-diamino-4-hydroxy-5-(N-methyl)formamidopyrimidine.. It carries out the reaction 2'-deoxyribonucleotide-(2'-deoxyribose 5'-phosphate)-2'-deoxyribonucleotide-DNA = a 3'-end 2'-deoxyribonucleotide-(2,3-dehydro-2,3-deoxyribose 5'-phosphate)-DNA + a 5'-end 5'-phospho-2'-deoxyribonucleoside-DNA + H(+). Involved in base excision repair of DNA damaged by oxidation or by mutagenic agents. Acts as a DNA glycosylase that recognizes and removes damaged bases. Has a preference for oxidized purines, such as 7,8-dihydro-8-oxoguanine (8-oxoG). Has AP (apurinic/apyrimidinic) lyase activity and introduces nicks in the DNA strand. Cleaves the DNA backbone by beta-delta elimination to generate a single-strand break at the site of the removed base with both 3'- and 5'-phosphates. The chain is Formamidopyrimidine-DNA glycosylase from Thermobifida fusca (strain YX).